We begin with the raw amino-acid sequence, 36 residues long: Ostricacin-1 (36 aa).

Cystine bridges form between Cys3/Cys29, Cys8/Cys23, and Cys13/Cys30.

It is found in the secreted. In terms of biological role, has antibacterial activity against the Gram-positive bacteria S.aureus 1056 MRSA (MIC=1.25 ug/ml) and S.aureus NCTC 4163 (MIC=6.7 ug/ml), and the Gram-negative bacteria E.coli O157:H7 (MIC=0.96 ug/ml) and E.coli 0111 (MIC=6.7 ug/ml). Does not have antifungal activity against the yeast C.albicans 3153A. This Struthio camelus (Common ostrich) protein is Ostricacin-1.